The chain runs to 279 residues: ATP synthase gamma chain (279 aa).

It belongs to the ATPase gamma chain family. F-type ATPases have 2 components, CF(1) - the catalytic core - and CF(0) - the membrane proton channel. CF(1) has five subunits: alpha(3), beta(3), gamma(1), delta(1), epsilon(1). CF(0) has three main subunits: a, b and c.

It localises to the cell membrane. Produces ATP from ADP in the presence of a proton gradient across the membrane. The gamma chain is believed to be important in regulating ATPase activity and the flow of protons through the CF(0) complex. This is ATP synthase gamma chain from Mycoplasma pneumoniae (strain ATCC 29342 / M129 / Subtype 1) (Mycoplasmoides pneumoniae).